The chain runs to 296 residues: 4-hydroxy-tetrahydrodipicolinate synthase (296 aa).

Residue T46 coordinates pyruvate. The active-site Proton donor/acceptor is the Y134. The active-site Schiff-base intermediate with substrate is the K162. I204 is a binding site for pyruvate.

The protein belongs to the DapA family. Homotetramer; dimer of dimers.

The protein localises to the cytoplasm. It carries out the reaction L-aspartate 4-semialdehyde + pyruvate = (2S,4S)-4-hydroxy-2,3,4,5-tetrahydrodipicolinate + H2O + H(+). It participates in amino-acid biosynthesis; L-lysine biosynthesis via DAP pathway; (S)-tetrahydrodipicolinate from L-aspartate: step 3/4. Catalyzes the condensation of (S)-aspartate-beta-semialdehyde [(S)-ASA] and pyruvate to 4-hydroxy-tetrahydrodipicolinate (HTPA). The polypeptide is 4-hydroxy-tetrahydrodipicolinate synthase (Clostridium novyi (strain NT)).